Here is a 94-residue protein sequence, read N- to C-terminus: U1-theraphotoxin-Sp1a (94 aa).

Residues 1–22 (MIFLLPSIISVMLLAEPVLMLG) form the signal peptide. The propeptide occupies 23–58 (DTEDADLMEMVQLSRPFFNPIIRAVELVELREERQR). Cystine bridges form between Cys-60/Cys-78, Cys-67/Cys-83, and Cys-77/Cys-88. Val-92 carries the post-translational modification Valine amide.

Belongs to the neurotoxin 14 (magi-1) family. OAIP-1 subfamily. In terms of tissue distribution, expressed by the venom gland.

Its subcellular location is the secreted. Probable ion channel inhibitor. Shows insecticidal activity. Acts synergistically with the neonicotinoid insecticide imidacloprid. Is neither a repellent that repels insects nor an attractant that is preferentially consumed by insects. Is very stable. The sequence is that of U1-theraphotoxin-Sp1a from Selenotypus plumipes (Australian featherleg tarantula).